Here is a 428-residue protein sequence, read N- to C-terminus: Enolase (428 aa).

Residue Q162 coordinates (2R)-2-phosphoglycerate. Residue E204 is the Proton donor of the active site. Positions 241, 283, and 310 each coordinate Mg(2+). (2R)-2-phosphoglycerate-binding residues include K335, R364, S365, and K386. The active-site Proton acceptor is K335.

This sequence belongs to the enolase family. It depends on Mg(2+) as a cofactor.

Its subcellular location is the cytoplasm. It localises to the secreted. It is found in the cell surface. It carries out the reaction (2R)-2-phosphoglycerate = phosphoenolpyruvate + H2O. Its pathway is carbohydrate degradation; glycolysis; pyruvate from D-glyceraldehyde 3-phosphate: step 4/5. Its function is as follows. Catalyzes the reversible conversion of 2-phosphoglycerate (2-PG) into phosphoenolpyruvate (PEP). It is essential for the degradation of carbohydrates via glycolysis. The polypeptide is Enolase (Rhodococcus erythropolis (strain PR4 / NBRC 100887)).